We begin with the raw amino-acid sequence, 318 residues long: Na(+)-translocating NADH-quinone reductase subunit C (318 aa).

The helical transmembrane segment at 13–33 (WYIILFIFVLSLVAGTLLSSV) threads the bilayer. Threonine 281 is modified (FMN phosphoryl threonine).

The protein belongs to the NqrC family. Composed of six subunits; NqrA, NqrB, NqrC, NqrD, NqrE and NqrF. It depends on FMN as a cofactor.

The protein resides in the cell inner membrane. It catalyses the reaction a ubiquinone + n Na(+)(in) + NADH + H(+) = a ubiquinol + n Na(+)(out) + NAD(+). Its function is as follows. NQR complex catalyzes the reduction of ubiquinone-1 to ubiquinol by two successive reactions, coupled with the transport of Na(+) ions from the cytoplasm to the periplasm. NqrA to NqrE are probably involved in the second step, the conversion of ubisemiquinone to ubiquinol. The protein is Na(+)-translocating NADH-quinone reductase subunit C of Chlamydia muridarum (strain MoPn / Nigg).